The chain runs to 219 residues: Ribose-5-phosphate isomerase A (219 aa).

Residues 28–31, 81–84, and 94–97 each bind substrate; these read SGST, DGAD, and KGGG. Glu103 serves as the catalytic Proton acceptor. Residue Lys121 participates in substrate binding.

This sequence belongs to the ribose 5-phosphate isomerase family. Homodimer.

The catalysed reaction is aldehydo-D-ribose 5-phosphate = D-ribulose 5-phosphate. It participates in carbohydrate degradation; pentose phosphate pathway; D-ribose 5-phosphate from D-ribulose 5-phosphate (non-oxidative stage): step 1/1. Its function is as follows. Catalyzes the reversible conversion of ribose-5-phosphate to ribulose 5-phosphate. In Haemophilus influenzae (strain PittEE), this protein is Ribose-5-phosphate isomerase A.